The chain runs to 127 residues: Large ribosomal subunit protein bL19 (127 aa).

This sequence belongs to the bacterial ribosomal protein bL19 family.

This protein is located at the 30S-50S ribosomal subunit interface and may play a role in the structure and function of the aminoacyl-tRNA binding site. This is Large ribosomal subunit protein bL19 from Trichodesmium erythraeum (strain IMS101).